We begin with the raw amino-acid sequence, 308 residues long: Methionyl-tRNA formyltransferase (308 aa).

110-113 is a (6S)-5,6,7,8-tetrahydrofolate binding site; it reads SLLP.

It belongs to the Fmt family.

It catalyses the reaction L-methionyl-tRNA(fMet) + (6R)-10-formyltetrahydrofolate = N-formyl-L-methionyl-tRNA(fMet) + (6S)-5,6,7,8-tetrahydrofolate + H(+). Attaches a formyl group to the free amino group of methionyl-tRNA(fMet). The formyl group appears to play a dual role in the initiator identity of N-formylmethionyl-tRNA by promoting its recognition by IF2 and preventing the misappropriation of this tRNA by the elongation apparatus. The polypeptide is Methionyl-tRNA formyltransferase (Neisseria meningitidis serogroup C / serotype 2a (strain ATCC 700532 / DSM 15464 / FAM18)).